A 60-amino-acid chain; its full sequence is MANKVIQLQKIFQSSTKPLWWRHPRSALYLYPFYAIFAVAVVTPLLYIPNAIRGIKAKKA.

Residues 2–29 lie on the Mitochondrial matrix side of the membrane; it reads ANKVIQLQKIFQSSTKPLWWRHPRSALY. The chain crosses the membrane as a helical span at residues 30-53; it reads LYPFYAIFAVAVVTPLLYIPNAIR. At 54–60 the chain is on the mitochondrial intermembrane side; sequence GIKAKKA.

The protein belongs to the cytochrome c oxidase VIIa family. As to quaternary structure, component of the cytochrome c oxidase (complex IV, CIV), a multisubunit enzyme composed of 12 subunits. The complex is composed of a catalytic core of 3 subunits COX1, COX2 and COX3, encoded in the mitochondrial DNA, and 9 supernumerary subunits COX4, COX5A (or COX5B), COX6, COX7, COX8, COX9, COX12, COX13 and COX26, which are encoded in the nuclear genome. The complex exists as a monomer or a dimer and forms supercomplexes (SCs) in the inner mitochondrial membrane with a dimer of ubiquinol-cytochrome c oxidoreductase (cytochrome b-c1 complex, complex III, CIII), resulting in 2 different assemblies (supercomplexes III(2)IV and III(2)IV(2)).

Its subcellular location is the mitochondrion inner membrane. It functions in the pathway energy metabolism; oxidative phosphorylation. In terms of biological role, component of the cytochrome c oxidase, the last enzyme in the mitochondrial electron transport chain which drives oxidative phosphorylation. The respiratory chain contains 3 multisubunit complexes succinate dehydrogenase (complex II, CII), ubiquinol-cytochrome c oxidoreductase (cytochrome b-c1 complex, complex III, CIII) and cytochrome c oxidase (complex IV, CIV), that cooperate to transfer electrons derived from NADH and succinate to molecular oxygen, creating an electrochemical gradient over the inner membrane that drives transmembrane transport and the ATP synthase. Cytochrome c oxidase is the component of the respiratory chain that catalyzes the reduction of oxygen to water. Electrons originating from reduced cytochrome c in the intermembrane space (IMS) are transferred via the dinuclear copper A center (CU(A)) of COX2 and heme A of COX1 to the active site in COX1, a binuclear center (BNC) formed by heme A3 and copper B (CU(B)). The BNC reduces molecular oxygen to 2 water molecules using 4 electrons from cytochrome c in the IMS and 4 protons from the mitochondrial matrix. In Saccharomyces cerevisiae (strain ATCC 204508 / S288c) (Baker's yeast), this protein is Cytochrome c oxidase subunit 7, mitochondrial (COX7).